The sequence spans 71 residues: Large ribosomal subunit protein bL31 (71 aa).

Positions 16, 18, 38, and 41 each coordinate Zn(2+).

It belongs to the bacterial ribosomal protein bL31 family. Type A subfamily. In terms of assembly, part of the 50S ribosomal subunit. The cofactor is Zn(2+).

Its function is as follows. Binds the 23S rRNA. The protein is Large ribosomal subunit protein bL31 of Neisseria meningitidis serogroup A / serotype 4A (strain DSM 15465 / Z2491).